The following is a 290-amino-acid chain: Type II restriction enzyme MjaIII (290 aa).

The protein belongs to the DpnII type II restriction endonuclease family.

It catalyses the reaction Endonucleolytic cleavage of DNA to give specific double-stranded fragments with terminal 5'-phosphates.. Functionally, a P subtype restriction enzyme that recognizes the double-stranded sequence 5'-GATC-3'; the cleavage site is unknown. The chain is Type II restriction enzyme MjaIII (mjaIIIR) from Methanocaldococcus jannaschii (strain ATCC 43067 / DSM 2661 / JAL-1 / JCM 10045 / NBRC 100440) (Methanococcus jannaschii).